An 887-amino-acid chain; its full sequence is Autotaxin (887 aa).

An N-terminal signal peptide occupies residues 1–27 (MARQGCLGSFQVISLFTFAISVNICLG). The propeptide at 28–35 (FTASRIKR) is removed by furin. A glycan (N-linked (GlcNAc...) asparagine) is linked at Asn-53. 2 SMB domains span residues 54-97 (TSGS…LKTA) and 98-142 (RGWE…GESH). 10 disulfides stabilise this stretch: Cys-58-Cys-75, Cys-62-Cys-93, Cys-73-Cys-86, Cys-79-Cys-85, Cys-102-Cys-119, Cys-107-Cys-137, Cys-117-Cys-130, Cys-123-Cys-129, Cys-148-Cys-194, and Cys-156-Cys-350. The Cell attachment site motif lies at 126 to 128 (RGD). The segment at 144–501 (VDDDCEEIKV…PTFKYRTKVP (358 aa)) is phosphodiesterase. Zn(2+) contacts are provided by Asp-171 and Thr-209. Thr-209 functions as the Nucleophile in the catalytic mechanism. Residues Thr-209, Asn-230, and Asp-311 each coordinate 1-(9Z-octadecenoyl)-sn-glycero-3-phosphate. Residues Thr-209, Asn-230, and Asp-311 each coordinate 1-hexadecanoyl-sn-glycero-3-phosphate. Residues Thr-209, Asn-230, and Asp-311 each contribute to the 1-tetradecanoyl-sn-glycerol 3-phosphate site. Residues Asp-311, His-315, Asp-358, and His-359 each coordinate Zn(2+). Intrachain disulfides connect Cys-366–Cys-468, Cys-413–Cys-830, Cys-566–Cys-691, Cys-568–Cys-676, and Cys-799–Cys-809. N-linked (GlcNAc...) asparagine glycosylation is found at Asn-398 and Asn-410. His-474 lines the Zn(2+) pocket. Residue His-474 participates in 1-(9Z-octadecenoyl)-sn-glycero-3-phosphate binding. His-474 provides a ligand contact to 1-hexadecanoyl-sn-glycero-3-phosphate. His-474 is a binding site for 1-tetradecanoyl-sn-glycerol 3-phosphate. N-linked (GlcNAc...) asparagine glycosylation is present at Asn-524. Residues 586-607 (HTKGSTEAETGKFRGSKHENKK) are compositionally biased toward basic and acidic residues. A disordered region spans residues 586–615 (HTKGSTEAETGKFRGSKHENKKNLNGSVEP). Residue Asn-610 is glycosylated (N-linked (GlcNAc...) asparagine). The segment at 622–887 (LYGRPAVLYR…TYLHTYESEI (266 aa)) is nuclease-like domain. The Ca(2+) site is built by Asp-764, Asn-766, Asp-768, Leu-770, and Asp-772. N-linked (GlcNAc...) asparagine glycosylation occurs at Asn-831. Residues 854–875 (IEHLTGLDFYRKTSRSYSEILT) form a required for secretion region.

It belongs to the nucleotide pyrophosphatase/phosphodiesterase family. Requires Zn(2+) as cofactor. Ca(2+) serves as cofactor. Post-translationally, N-glycosylation, but not furin-cleavage, plays a critical role on secretion and on lysoPLD activity. In terms of processing, the interdomain disulfide bond between Cys-413 and Cys-830 is essential for catalytic activity. In terms of tissue distribution, abundantly expressed in cerebrum and cerebellum. Localized in secretory epithelial cells in the brain and the eye including choroid plexus epithelial cells, ciliary epithelial cells, iris pigment epithelial cells, and retinal pigment cells.

It is found in the secreted. The catalysed reaction is a 1-O-alkyl-sn-glycero-3-phosphoethanolamine + H2O = a 1-O-alkyl-sn-glycero-3-phosphate + ethanolamine + H(+). It catalyses the reaction a 1-acyl-sn-glycero-3-phosphoethanolamine + H2O = a 1-acyl-sn-glycero-3-phosphate + ethanolamine + H(+). The enzyme catalyses 1-(9Z-octadecenoyl)-sn-glycero-3-phosphoethanolamine + H2O = 1-(9Z-octadecenoyl)-sn-glycero-3-phosphate + ethanolamine + H(+). It carries out the reaction a 1-O-alkyl-sn-glycero-3-phosphocholine + H2O = a 1-O-alkyl-sn-glycero-3-phosphate + choline + H(+). The catalysed reaction is 1-O-(9Z-octadecenyl)-sn-glycero-3-phosphocholine + H2O = 1-O-(9Z-octadecenyl)-sn-glycero-3-phosphate + choline + H(+). It catalyses the reaction 1-O-hexadecyl-sn-glycero-3-phosphocholine + H2O = 1-O-hexadecyl-sn-glycero-3-phosphate + choline + H(+). The enzyme catalyses a 1-O-(1Z-alkenyl)-sn-glycero-3-phosphocholine + H2O = a 1-O-(1Z-alkenyl)-sn-glycero-3-phosphate + choline + H(+). It carries out the reaction a 1-acyl-sn-glycero-3-phosphocholine + H2O = a 1-acyl-sn-glycero-3-phosphate + choline + H(+). The catalysed reaction is 1-dodecanoyl-sn-glycero-3-phosphocholine + H2O = 1-dodecanoyl-sn-glycerol 3-phosphate + choline + H(+). It catalyses the reaction 1-(9Z-octadecenoyl)-sn-glycero-3-phosphocholine + H2O = 1-(9Z-octadecenoyl)-sn-glycero-3-phosphate + choline + H(+). The enzyme catalyses 1-tetradecanoyl-sn-glycero-3-phosphocholine + H2O = 1-tetradecanoyl-sn-glycerol 3-phosphate + choline + H(+). It carries out the reaction 1-decanoyl-sn-glycero-3-phosphocholine + H2O = 1-decanoyl-sn-glycero-3-phosphate + choline + H(+). The catalysed reaction is 1-octadecanoyl-sn-glycero-3-phosphocholine + H2O = 1-octadecanoyl-sn-glycero-3-phosphate + choline + H(+). It catalyses the reaction 1-hexadecanoyl-sn-glycero-3-phosphocholine + H2O = 1-hexadecanoyl-sn-glycero-3-phosphate + choline + H(+). The enzyme catalyses 1-hexanoyl-sn-glycero-3-phosphocholine + H2O = 1-hexanoyl-sn-glycero-3-phosphate + choline + H(+). It carries out the reaction 1-(9Z,12Z)-octadecadienoyl-sn-glycero-3-phosphocholine + H2O = 1-(9Z,12Z)-octadecadienoyl-sn-glycero-3-phosphate + choline + H(+). The catalysed reaction is sphing-4-enine-phosphocholine + H2O = sphing-4-enine 1-phosphate + choline + H(+). It catalyses the reaction 1-(5Z,8Z,11Z,14Z-eicosatetraenoyl)-sn-glycero-3-phosphocholine + H2O = 1-(5Z,8Z,11Z,14Z-eicosatetraenoyl)-sn-glycero-3-phosphate + choline + H(+). The enzyme catalyses a 2-acyl-sn-glycero-3-phosphocholine + H2O = a 2-acyl-sn-glycerol 3-phosphate + choline + H(+). It carries out the reaction a 1,2-diacyl-sn-glycero-3-phosphocholine + H2O = a 1,2-diacyl-sn-glycero-3-phosphate + choline + H(+). The catalysed reaction is 1,2-dioctanoyl-sn-glycero-3-phosphocholine + H2O = 1,2-dioctanoyl-sn-glycero-3-phosphate + choline + H(+). It catalyses the reaction 1,2-didecanoyl-sn-glycero-3-phosphocholine + H2O = 1,2-didecanoyl-sn-glycero-3-phosphate + choline + H(+). The enzyme catalyses a 1-acyl-sn-glycero-3-phospho-L-serine + H2O = a 1-acyl-sn-glycero-3-phosphate + L-serine + H(+). It carries out the reaction 1-(9Z-octadecenoyl)-sn-glycero-3-phospho-L-serine + H2O = 1-(9Z-octadecenoyl)-sn-glycero-3-phosphate + L-serine + H(+). The catalysed reaction is a 2-acyl-sn-glycero-3-phospho-L-serine + H2O = a 2-acyl-sn-glycerol 3-phosphate + L-serine + H(+). Inhibited by vanadate. Inhibited by micromolar levels of bile salts, such as tauroursodeoxycholate. Not inhibited by taurodeoxycholate. Not inhibited by hydroxysterols, such as 7-hydroxycholesterol, testosterone, dexamethasone and prednisolone. Inhibited by EDTA and EGTA. Functionally, secreted lysophospholipase D that hydrolyzes lysophospholipids to produce the signaling molecule lysophosphatidic acid (LPA) in extracellular fluids. Its major substrate is lysophosphatidylcholine. Can also act on sphingosylphosphorylcholine producing sphingosine-1-phosphate, a modulator of cell motility. Can hydrolyze, in vitro, bis-pNPP, to some extent pNP-TMP, and barely ATP. Involved in several motility-related processes such as angiogenesis and neurite outgrowth. Acts as an angiogenic factor by stimulating migration of smooth muscle cells and microtubule formation. Stimulates migration of melanoma cells, probably via a pertussis toxin-sensitive G protein. May have a role in induction of parturition. Possible involvement in cell proliferation and adipose tissue development. Required for LPA production in activated platelets, cleaves the sn-1 lysophospholipids to generate sn-1 lysophosphatidic acids containing predominantly 18:2 and 20:4 fatty acids. Shows a preference for the sn-1 to the sn-2 isomer of 1-O-alkyl-sn-glycero-3-phosphocholine (lyso-PAF). The polypeptide is Autotaxin (Rattus norvegicus (Rat)).